A 174-amino-acid polypeptide reads, in one-letter code: Cytidylate kinase (174 aa).

Position 7–15 (7–15 (GLPGTGTTT)) interacts with ATP.

It belongs to the cytidylate kinase family. Type 2 subfamily.

The protein resides in the cytoplasm. It carries out the reaction CMP + ATP = CDP + ADP. It catalyses the reaction dCMP + ATP = dCDP + ADP. The polypeptide is Cytidylate kinase (Methanococcus vannielii (strain ATCC 35089 / DSM 1224 / JCM 13029 / OCM 148 / SB)).